Here is a 226-residue protein sequence, read N- to C-terminus: Glyceraldehyde 3-phosphate phosphatase (226 aa).

It belongs to the HAD-like hydrolase superfamily. Requires Mg(2+) as cofactor.

In terms of biological role, catalyzes the dephosphorylation of D,L-glyceraldehyde 3-phosphate in vitro. This is Glyceraldehyde 3-phosphate phosphatase from Methanothermobacter thermautotrophicus (strain ATCC 29096 / DSM 1053 / JCM 10044 / NBRC 100330 / Delta H) (Methanobacterium thermoautotrophicum).